A 210-amino-acid chain; its full sequence is N-(5'-phosphoribosyl)anthranilate isomerase (210 aa).

Belongs to the TrpF family.

It carries out the reaction N-(5-phospho-beta-D-ribosyl)anthranilate = 1-(2-carboxyphenylamino)-1-deoxy-D-ribulose 5-phosphate. It participates in amino-acid biosynthesis; L-tryptophan biosynthesis; L-tryptophan from chorismate: step 3/5. The protein is N-(5'-phosphoribosyl)anthranilate isomerase of Trichormus variabilis (strain ATCC 29413 / PCC 7937) (Anabaena variabilis).